Reading from the N-terminus, the 773-residue chain is MLRARLLVPLVRPALVHRLDRCYSTALGSRFRKSNAVRSELKFDFPDVPVKEELFVQETPDKPLKENKTHVSDEDIDSLFDSLMSDHKAAEATEQHKELPPAEQERPSGANTHTAPIKHDTKSPMEYLAKSKLTPHVSRQVAKAMAGSPTQLLLATPASHHISTPAYQNDLWKHVISTLNTSKFQIPDFNSLMTTIPVDIRAQFLPQIEEWISQRGVKPSAITYGQVMLGYAEDGNVEKVEERFRQMIDNNITPTVHTYAHRLKACDKRGDLKQAMEIFDDLKLAQQLYGIRPNQVIFTTLISTSLRNHKVELASQIFEYMKYASLETQPTAHTYNSLITASAIRSNTERALDLFEEMKQKSVANVRTYQSLILACLRQEKYHLKAWELLLELREQHSESFYSRHTLVVVFQAAAVTGDLVFLRSLYKQLCMSPETYPDAILTQLLMQAYARYDTRTKPVASSALRATWGRLYGGNAQEMMRGFLFPDIEGMVQLNEEHPGMIPPFLPTNTIESLSFDRKKIIAESRAIFQFLKNNKPQLLDNIAATDYLKAGARHRDFPEFLRRYNEVSVGAGEAEGAVISPSEMKTYSARQKKPQRYDLQTQFSPAPRSDAHFFIALNAVQADCIADASERDPNLNHPLRRLTPQEMTDRLEFSQDVWVERGKWRKSDAYKNKYRTEAQQISADYNFALKIINALAALKQLGEAAAILSATPATFNWKKHDLAFFHNVAQAFYHEEAMKQIHKAVSRSKHLDEVIRNPDSEKSAEFDVFSI.

The N-terminal 23 residues, 1–23, are a transit peptide targeting the mitochondrion; that stretch reads MLRARLLVPLVRPALVHRLDRCY. Residues 89-106 are compositionally biased toward basic and acidic residues; the sequence is AAEATEQHKELPPAEQER. The disordered stretch occupies residues 89–122; that stretch reads AAEATEQHKELPPAEQERPSGANTHTAPIKHDTK. PPR repeat units follow at residues 220-254, 255-285, 294-328, 331-365, and 366-400; these read SAIT…NITP, TVHT…LKLA, NQVI…SLET, TAHT…SVAN, and VRTY…HSES.

The protein belongs to the CCM1 family. In terms of assembly, binds to mitochondrial small subunit 15S rRNA.

Its subcellular location is the mitochondrion. Regulates mitochondrial small subunit maturation by controlling 15S rRNA 5'-end processing. Localizes to the 5' precursor of the 15S rRNA in a position that is subsequently occupied by mS47 in the mature yeast mtSSU. Uses structure and sequence-specific RNA recognition, binding to a single-stranded region of the precursor and specifically recognizing bases -6 to -1. The exchange of Ccm1 for mS47 is coupled to the irreversible removal of precursor rRNA that is accompanied by conformational changes of the mitoribosomal proteins uS5m and mS26. These conformational changes signal completion of 5'-end rRNA processing through protection of the mature 5'-end of the 15S rRNA and stabilization of mS47. The removal of the 5' precursor together with the dissociation of Ccm1 may be catalyzed by the 5'-3' exoribonuclease Pet127. Involved in the specific removal of group I introns in mitochondrial encoded transcripts. In Yarrowia lipolytica (strain CLIB 122 / E 150) (Yeast), this protein is Mitochondrial 15S rRNA processing factor CCM1 (CCM1).